Consider the following 313-residue polypeptide: Methionyl-tRNA formyltransferase (313 aa).

A (6S)-5,6,7,8-tetrahydrofolate-binding site is contributed by 113-116 (SLLP).

Belongs to the Fmt family.

It catalyses the reaction L-methionyl-tRNA(fMet) + (6R)-10-formyltetrahydrofolate = N-formyl-L-methionyl-tRNA(fMet) + (6S)-5,6,7,8-tetrahydrofolate + H(+). In terms of biological role, attaches a formyl group to the free amino group of methionyl-tRNA(fMet). The formyl group appears to play a dual role in the initiator identity of N-formylmethionyl-tRNA by promoting its recognition by IF2 and preventing the misappropriation of this tRNA by the elongation apparatus. This chain is Methionyl-tRNA formyltransferase, found in Francisella tularensis subsp. mediasiatica (strain FSC147).